The sequence spans 463 residues: Aromatic amino acid transport protein AroP (463 aa).

Helical transmembrane passes span 18 to 38, 40 to 60, 84 to 104, 117 to 137, 157 to 177, 200 to 220, 237 to 257, 276 to 296, 337 to 357, 358 to 378, 402 to 422, and 431 to 451; these read TMMG…GVGI, AAGP…VLVM, FGHW…IMVM, AWFG…FAVV, VAVI…WLPG, VAAG…VTIA, AVIW…TFLM, ILAM…IVLA, AVLL…WNPA, GLLD…WAMI, AHPW…ALML, and VYSV…TVNS.

The protein belongs to the amino acid-polyamine-organocation (APC) superfamily. Amino acid transporter (AAT) (TC 2.A.3.1) family.

It localises to the cell membrane. The catalysed reaction is L-phenylalanine(in) + H(+)(in) = L-phenylalanine(out) + H(+)(out). The enzyme catalyses L-tryptophan(in) + H(+)(in) = L-tryptophan(out) + H(+)(out). It catalyses the reaction L-tyrosine(in) + H(+)(in) = L-tyrosine(out) + H(+)(out). Permease that is involved in the active transport across the cytoplasmic membrane of all three aromatic amino acids, phenylalanine, tyrosine and tryptophan. The sequence is that of Aromatic amino acid transport protein AroP from Corynebacterium glutamicum (strain ATCC 13032 / DSM 20300 / JCM 1318 / BCRC 11384 / CCUG 27702 / LMG 3730 / NBRC 12168 / NCIMB 10025 / NRRL B-2784 / 534).